Reading from the N-terminus, the 519-residue chain is Cytosol aminopeptidase (519 aa).

Residue Ser-42 is modified to Phosphoserine. The residue at position 45 (Lys-45) is an N6-succinyllysine. Ser-54 bears the Phosphoserine mark. N6-succinyllysine is present on residues Lys-61 and Lys-103. Phosphoserine is present on residues Ser-180 and Ser-194. Leu-202, Met-203, and Thr-205 together coordinate Zn(2+). Lys-221 is subject to N6-acetyllysine; alternate. At Lys-221 the chain carries N6-succinyllysine; alternate. Ser-238 carries the phosphoserine modification. The Zn(2+) site is built by Lys-282 and Asp-287. Residues Lys-282, Asp-287, Ser-292, and Lys-294 each coordinate substrate. Residue Asp-287 participates in Mg(2+) binding. Lys-294 is an active-site residue. Zn(2+) is bound by residues Arg-303, Asp-305, Asp-364, and Glu-366. Substrate is bound by residues Asp-305 and Asp-364. Residues Asp-364 and Glu-366 each contribute to the Mg(2+) site. Residue Arg-368 is part of the active site. Residue Lys-455 is modified to N6-acetyllysine; alternate. At Lys-455 the chain carries N6-succinyllysine; alternate. Position 476 is an N6-succinyllysine (Lys-476). Lys-489 is subject to N6-acetyllysine; alternate. Residue Lys-489 is modified to N6-succinyllysine; alternate.

Belongs to the peptidase M17 family. As to quaternary structure, homohexamer. The cofactor is Zn(2+). Mn(2+) serves as cofactor.

The protein localises to the cytoplasm. The enzyme catalyses Release of an N-terminal amino acid, Xaa-|-Yaa-, in which Xaa is preferably Leu, but may be other amino acids including Pro although not Arg or Lys, and Yaa may be Pro. Amino acid amides and methyl esters are also readily hydrolyzed, but rates on arylamides are exceedingly low.. The catalysed reaction is an S-substituted L-cysteinylglycine + H2O = an S-substituted L-cysteine + glycine. It catalyses the reaction L-cysteinylglycine + H2O = L-cysteine + glycine. It carries out the reaction S-benzyl-L-cysteinylglycine + H2O = S-benzyl-L-cysteine + glycine. The enzyme catalyses Release of N-terminal proline from a peptide.. Functionally, cytosolic metallopeptidase that catalyzes the removal of unsubstituted N-terminal hydrophobic amino acids from various peptides. The presence of Zn(2+) ions is essential for the peptidase activity, and the association with other cofactors can modulate the substrate spectificity of the enzyme. For instance, in the presence of Mn(2+), it displays a specific Cys-Gly hydrolyzing activity of Cys-Gly-S-conjugates. Involved in the metabolism of glutathione and in the degradation of glutathione S-conjugates, which may play a role in the control of the cell redox status. The protein is Cytosol aminopeptidase of Homo sapiens (Human).